The following is an 843-amino-acid chain: Potassium transporter 10 (843 aa).

Over residues 1-15 (MKSPSPVDPESPSSP) the composition is skewed to low complexity. The tract at residues 1–25 (MKSPSPVDPESPSSPDCKGGSSSKR) is disordered. At 1–34 (MKSPSPVDPESPSSPDCKGGSSSKRRRLPWRMTM) the chain is on the cytoplasmic side. The helical transmembrane segment at 35–55 (SLAYQSLGVVYGDLSTSPLYV) threads the bilayer. Over 56–72 (YKAAFAEDIQHSETNEE) the chain is Vacuolar. Residues 73–93 (ILGVLSFVFWTLTLVPLLKYV) traverse the membrane as a helical segment. Over 94–183 (CVVLRADDNG…LLERHKVLQR (90 aa)) the chain is Cytoplasmic. Residues 184–204 (VLLVLALVGTCMVIGDGVLTP) form a helical membrane-spanning segment. The Vacuolar portion of the chain corresponds to 205-225 (AISVFSAVSGLELSMEKHQHK). A helical membrane pass occupies residues 226–246 (YVEVPIACFVLVCLFCLQHYG). At 247-249 (THR) the chain is on the cytoplasmic side. A helical transmembrane segment spans residues 250–270 (VGFLFAPIVITWLLCISMIGV). Residues 271-298 (YNIVHWEPNVYRALSPYYMYKFLKKTQR) are Vacuolar-facing. The helical transmembrane segment at 299-319 (GGWMSLGGILLCITGSEAMFA) threads the bilayer. Topologically, residues 320–326 (DLGHFNQ) are cytoplasmic. A helical membrane pass occupies residues 327 to 347 (LSIQIAFTCMVYPSLILAYMG). Over 348-377 (QAAYLCKHHIIESDYRIGFYVSVPEKIRWP) the chain is Vacuolar. Residues 378–398 (VLAIAILAAVVGSQAVITGTF) form a helical membrane-spanning segment. Over 399–425 (SMIKQCTALGCFPRVKIVHTSDKVHGQ) the chain is Cytoplasmic. Residues 426–446 (IYIPEINWILMILCLAITIGF) form a helical membrane-spanning segment. Residues 447–451 (RDTKH) lie on the Vacuolar side of the membrane. A helical membrane pass occupies residues 452–472 (LGNASGLAVITVMLVTTCLMS). Residues 473–482 (LVIVLCWHKS) are Cytoplasmic-facing. Residues 483-505 (IFLAFGFIIFFGTIEALYFSASL) form a helical membrane-spanning segment. Over 506–510 (IKFRE) the chain is Vacuolar. The chain crosses the membrane as a helical span at residues 511–531 (GAWVPIVLAFIFMAIMCIWHY). Residues 532 to 843 (GTIKKYEFDL…TLEVGMIYYV (312 aa)) are Cytoplasmic-facing. The interval 667–747 (AASSKPKNVC…IMSPSPSPPP (81 aa)) is disordered. Residues 718–735 (GGSGSGSGRGSSRGGGGA) show a composition bias toward gly residues.

Belongs to the HAK/KUP transporter (TC 2.A.72.3) family. As to expression, expressed in roots, shoots, and panicle at flowering stage.

It is found in the vacuole membrane. In terms of biological role, high-affinity potassium transporter. The protein is Potassium transporter 10 (HAK10) of Oryza sativa subsp. japonica (Rice).